Here is a 428-residue protein sequence, read N- to C-terminus: D-serine dehydratase (428 aa).

K57 is modified (N6-(pyridoxal phosphate)lysine). Y203, Y210, T255, G286, and N287 together coordinate pyridoxal 5'-phosphate. Zn(2+)-binding residues include H398 and C400.

Belongs to the DSD1 family. In terms of assembly, homodimer. It depends on pyridoxal 5'-phosphate as a cofactor. The cofactor is Zn(2+).

The enzyme catalyses D-serine = pyruvate + NH4(+). Sodium cyanoborohydride, N-ethylmaleimide, hydroxylamine, phenyhydrazin and EDTA are inhibitors of the catalytic activity. Functionally, catalyzes the conversion of D-serine to pyruvate and ammonia. May play a role in D-serine detoxification. This Saccharomyces cerevisiae (strain ATCC 204508 / S288c) (Baker's yeast) protein is D-serine dehydratase.